The following is a 118-amino-acid chain: Putative pterin-4-alpha-carbinolamine dehydratase (118 aa).

It belongs to the pterin-4-alpha-carbinolamine dehydratase family.

It carries out the reaction (4aS,6R)-4a-hydroxy-L-erythro-5,6,7,8-tetrahydrobiopterin = (6R)-L-erythro-6,7-dihydrobiopterin + H2O. This Pseudomonas entomophila (strain L48) protein is Putative pterin-4-alpha-carbinolamine dehydratase.